Reading from the N-terminus, the 544-residue chain is Neurofilament light polypeptide (544 aa).

Position 2 is an N-acetylserine (serine 2). A head region spans residues 2–87 (SSYSYDPYYT…KIVRTQEKVQ (86 aa)). The 311-residue stretch at 84–394 (EKVQLQDLND…KLLEGEETRL (311 aa)) folds into the IF rod domain. A coil 1A region spans residues 88–119 (LQDLNDRFANFIERVHELEQRNKVLEAELLLL). Residues 120 to 132 (RQKHNEPSRLRDM) are linker 1. Residues 133–228 (YEKEVRDVRL…KVHEEELSQL (96 aa)) form a coil 1B region. Residues 229 to 246 (QSQVQYAQVSLEVEVAKP) are linker 12. The interval 247-265 (DLSSALRDIRGQYEKLAAK) is coil 2A. A linker 2 region spans residues 266–274 (NMQSAEEWF). Positions 275 to 390 (KSRFTVLTQS…AAYRKLLEGE (116 aa)) are coil 2B. Positions 391–435 (ETRLSFSGVGAITSGYTQSAPVFGRSAYSLQSSSYMTSRAFPTYY) are tail, subdomain A. The interval 391–544 (ETRLSFSGVG…EESEKKEKKK (154 aa)) is tail. The tail, subdomain B (acidic) stretch occupies residues 436-544 (SSHVQEEQLD…EESEKKEKKK (109 aa)). The disordered stretch occupies residues 450–544 (IESSRAEEAK…EESEKKEKKK (95 aa)). Over residues 451-462 (ESSRAEEAKAEA) the composition is skewed to basic and acidic residues. Residues 463 to 525 (PEEEEEEAAE…EAEGDGEEEG (63 aa)) are compositionally biased toward acidic residues. Residues 526-544 (ESKGDEAAEEESEKKEKKK) show a composition bias toward basic and acidic residues.

Belongs to the intermediate filament family. As to quaternary structure, forms homodimers (in vitro).

It localises to the cell projection. The protein localises to the axon. The protein resides in the cytoplasm. Its subcellular location is the cytoskeleton. Its function is as follows. Neurofilaments usually contain three intermediate filament proteins: NEFL, NEFM, and NEFH which are involved in the maintenance of neuronal caliber. May additionally cooperate with other neuronal intermediate filament proteins to form neuronal filamentous networks. This chain is Neurofilament light polypeptide (nefl), found in Xenopus laevis (African clawed frog).